Here is a 226-residue protein sequence, read N- to C-terminus: Arpin (226 aa).

The segment at 211–226 is necessary and sufficient for interaction with ARPC2; the sequence is EIREQGDGAEDEEWDD.

The protein belongs to the Arpin family. Associates with the Arp2/3 complex. Interacts with ARPC2; enhanced by activated RAC1. Interacts with ARPC5; the interaction is dependent on RAC1.

Its subcellular location is the cell projection. It localises to the lamellipodium. Its function is as follows. Regulates actin polymerization by inhibiting the actin-nucleating activity of the Arp2/3 complex; the function is competitive with nucleation promoting factors. Participates in an incoherent feedforward loop at the lamellipodium tip where it inhibits the ARP2/2 complex in response to Rac signaling and where Rac also stimulates actin polymerization through the WAVE complex. Involved in steering cell migration by controlling its directional persistence. The chain is Arpin (ARPIN) from Homo sapiens (Human).